Here is a 323-residue protein sequence, read N- to C-terminus: Beta-ketoacyl-[acyl-carrier-protein] synthase III (323 aa).

Catalysis depends on residues Cys-113 and His-250. The tract at residues Gln-251–Arg-255 is ACP-binding. Residue Asn-280 is part of the active site.

Belongs to the thiolase-like superfamily. FabH family. As to quaternary structure, homodimer.

Its subcellular location is the cytoplasm. The catalysed reaction is malonyl-[ACP] + acetyl-CoA + H(+) = 3-oxobutanoyl-[ACP] + CO2 + CoA. It functions in the pathway lipid metabolism; fatty acid biosynthesis. Functionally, catalyzes the condensation reaction of fatty acid synthesis by the addition to an acyl acceptor of two carbons from malonyl-ACP. Catalyzes the first condensation reaction which initiates fatty acid synthesis and may therefore play a role in governing the total rate of fatty acid production. Possesses both acetoacetyl-ACP synthase and acetyl transacylase activities. Its substrate specificity determines the biosynthesis of branched-chain and/or straight-chain of fatty acids. This Chelativorans sp. (strain BNC1) protein is Beta-ketoacyl-[acyl-carrier-protein] synthase III.